Consider the following 207-residue polypeptide: Pyridoxal 5'-phosphate synthase subunit PdxT (207 aa).

53 to 55 (GES) contacts L-glutamine. The Nucleophile role is filled by cysteine 85. L-glutamine-binding positions include arginine 114 and 143–144 (IR). Catalysis depends on charge relay system residues histidine 184 and glutamate 186.

This sequence belongs to the glutaminase PdxT/SNO family. In the presence of PdxS, forms a dodecamer of heterodimers. Only shows activity in the heterodimer.

It catalyses the reaction aldehydo-D-ribose 5-phosphate + D-glyceraldehyde 3-phosphate + L-glutamine = pyridoxal 5'-phosphate + L-glutamate + phosphate + 3 H2O + H(+). It carries out the reaction L-glutamine + H2O = L-glutamate + NH4(+). It participates in cofactor biosynthesis; pyridoxal 5'-phosphate biosynthesis. Its function is as follows. Catalyzes the hydrolysis of glutamine to glutamate and ammonia as part of the biosynthesis of pyridoxal 5'-phosphate. The resulting ammonia molecule is channeled to the active site of PdxS. In Acidothermus cellulolyticus (strain ATCC 43068 / DSM 8971 / 11B), this protein is Pyridoxal 5'-phosphate synthase subunit PdxT.